Here is a 537-residue protein sequence, read N- to C-terminus: Carbamoyl phosphate synthase large chain, C-terminal section (537 aa).

The interval 1 to 395 is carbamoyl phosphate synthetic domain; the sequence is MSKKVVILGS…AYYKAQLSAG (395 aa). In terms of domain architecture, ATP-grasp spans 122–313; the sequence is RELIIELGLK…LAKIATKVAI (192 aa). Arginine 158, lysine 197, leucine 199, glutamate 204, glycine 229, valine 230, histidine 231, serine 232, glutamine 272, and glutamate 284 together coordinate ATP. Mg(2+) is bound by residues glutamine 272, glutamate 284, and asparagine 286. Mn(2+)-binding residues include glutamine 272, glutamate 284, and asparagine 286. The 142-residue stretch at 396-537 folds into the MGS-like domain; it reads YRLPEKGNLF…VHSLQEIYNI (142 aa). An allosteric domain region spans residues 396 to 537; the sequence is YRLPEKGNLF…VHSLQEIYNI (142 aa).

It belongs to the CarB family. As to quaternary structure, composed of two chains; the small (or glutamine) chain promotes the hydrolysis of glutamine to ammonia, which is used by the large (or ammonia) chain to synthesize carbamoyl phosphate. Tetramer of heterodimers (alpha,beta)4. The cofactor is Mg(2+). It depends on Mn(2+) as a cofactor.

It catalyses the reaction hydrogencarbonate + L-glutamine + 2 ATP + H2O = carbamoyl phosphate + L-glutamate + 2 ADP + phosphate + 2 H(+). The catalysed reaction is hydrogencarbonate + NH4(+) + 2 ATP = carbamoyl phosphate + 2 ADP + phosphate + 2 H(+). It functions in the pathway amino-acid biosynthesis; L-arginine biosynthesis; carbamoyl phosphate from bicarbonate: step 1/1. The protein operates within pyrimidine metabolism; UMP biosynthesis via de novo pathway; (S)-dihydroorotate from bicarbonate: step 1/3. Functionally, large subunit of the glutamine-dependent carbamoyl phosphate synthetase (CPSase). CPSase catalyzes the formation of carbamoyl phosphate from the ammonia moiety of glutamine, carbonate, and phosphate donated by ATP, constituting the first step of 2 biosynthetic pathways, one leading to arginine and/or urea and the other to pyrimidine nucleotides. The large subunit (synthetase) binds the substrates ammonia (free or transferred from glutamine from the small subunit), hydrogencarbonate and ATP and carries out an ATP-coupled ligase reaction, activating hydrogencarbonate by forming carboxy phosphate which reacts with ammonia to form carbamoyl phosphate. This chain is Carbamoyl phosphate synthase large chain, C-terminal section (carB2), found in Aquifex aeolicus (strain VF5).